The sequence spans 37 residues: Large ribosomal subunit protein bL36 (37 aa).

The protein belongs to the bacterial ribosomal protein bL36 family.

In Helicobacter pylori (strain HPAG1), this protein is Large ribosomal subunit protein bL36.